A 202-amino-acid chain; its full sequence is Large ribosomal subunit protein bL25 (202 aa).

It belongs to the bacterial ribosomal protein bL25 family. CTC subfamily. In terms of assembly, part of the 50S ribosomal subunit; part of the 5S rRNA/L5/L18/L25 subcomplex. Contacts the 5S rRNA. Binds to the 5S rRNA independently of L5 and L18.

Its function is as follows. This is one of the proteins that binds to the 5S RNA in the ribosome where it forms part of the central protuberance. This is Large ribosomal subunit protein bL25 from Clostridium perfringens (strain ATCC 13124 / DSM 756 / JCM 1290 / NCIMB 6125 / NCTC 8237 / Type A).